Consider the following 289-residue polypeptide: Delta-sarcoglycan (289 aa).

The Cytoplasmic portion of the chain corresponds to 1-37 (MPQEQYSHHRSTMPSSEGPHIYKVGIYGWRKRCLYFF). Residues 38–56 (VLLLMILILVNLAMTIWIL) traverse the membrane as a helical; Signal-anchor for type II membrane protein segment. At 57-289 (KVMNFTIDGM…TCQINTSVCL (233 aa)) the chain is on the extracellular side. Asn-60 and Asn-108 each carry an N-linked (GlcNAc...) asparagine glycan. Intrachain disulfides connect Cys-263-Cys-288 and Cys-265-Cys-281. N-linked (GlcNAc...) asparagine glycosylation occurs at Asn-284.

It belongs to the sarcoglycan beta/delta/gamma/zeta family. Interacts with FLNC. Cross-link to form 2 major subcomplexes: one consisting of SGCB, SGCD and SGCG and the other consisting of SGCB and SGCD. The association between SGCB and SGCG is particularly strong while SGCA is loosely associated with the other sarcoglycans. Interacts with DAG1. Disulfide bonds are present. In terms of tissue distribution, most strongly expressed in skeletal and heart muscle. Also detected in proliferating myoblasts.

The protein resides in the cell membrane. The protein localises to the sarcolemma. Its subcellular location is the cytoplasm. It is found in the cytoskeleton. In terms of biological role, component of the sarcoglycan complex, a subcomplex of the dystrophin-glycoprotein complex which forms a link between the F-actin cytoskeleton and the extracellular matrix. The protein is Delta-sarcoglycan (Sgcd) of Mus musculus (Mouse).